The sequence spans 316 residues: tRNA selenocysteine 1-associated protein 1-like (316 aa).

RRM domains lie at 6–89 (TSLW…YATY) and 99–178 (FSVF…IAVN). A compositionally biased stretch (pro residues) spans 239 to 248 (PPMGMPPMPP). The interval 239–285 (PPMGMPPMPPDMQGSTEAHDGTEEVEEDPSEDPNPQVDVEELNRQYM) is disordered.

Belongs to the RRM TRSPAP family.

It is found in the nucleus. It localises to the cytoplasm. Involved in the early steps of selenocysteine biosynthesis and tRNA(Sec) charging to the later steps resulting in the cotranslational incorporation of selenocysteine into selenoproteins. The sequence is that of tRNA selenocysteine 1-associated protein 1-like (trnau1apl) from Danio rerio (Zebrafish).